The primary structure comprises 668 residues: RNA-binding protein PIN4 (668 aa).

Positions 1 to 77 (METSSFENAP…NLNNAPTNGA (77 aa)) are disordered. The segment covering 8–23 (NAPPAAINDAQDNNIN) has biased composition (low complexity). Residues 24 to 36 (TETNDQETNQQSI) are compositionally biased toward polar residues. Residues 37–46 (ETRDAIDKEN) are compositionally biased toward basic and acidic residues. Residues 47–74 (GVQTETGENSAKNAEQNVSSTNLNNAPT) are compositionally biased toward polar residues. S56 carries the post-translational modification Phosphoserine. An RRM domain is found at 85–163 (NAIVIKNIPF…RKLKVEYKKM (79 aa)). Basic and acidic residues predominate over residues 168-188 (ERERIEREKREKRGQLEEQHR). Positions 168–214 (ERERIEREKREKRGQLEEQHRSSSNLSLDSLSKMSGSGNNNTSNNQL) are disordered. Residues S189, S191, S194, and S197 each carry the phosphoserine modification. Low complexity predominate over residues 189-212 (SSSNLSLDSLSKMSGSGNNNTSNN). At T305 the chain carries Phosphothreonine. 2 disordered regions span residues 374–398 (QQQGQMTSAHPLQPNSTGGSMNRSQ) and 420–570 (VNNS…QRVP). S393 is subject to Phosphoserine. A compositionally biased stretch (low complexity) spans 420-449 (VNNSSNSNTINSNNGNGNNVIINNNSASST). Over residues 450-478 (PKISSQGQFSMQPTLTSPKMNIHHSSQYN) the composition is skewed to polar residues. S466 carries the phosphoserine modification. Low complexity predominate over residues 479-508 (SADQPQQPQPQTQQNVQSAAQQQQSFLRQQ). Over residues 509 to 551 (ATLTPSSRIPSGYSANHYQINSVNPLLRNSQISPPNSQIPINS) the composition is skewed to polar residues. At S541 the chain carries Phosphoserine. The span at 552–567 (QTLSQAQPPAQSQTQQ) shows a compositional bias: low complexity. A phosphoserine mark is found at S636, S638, S640, S653, and S655.

In terms of assembly, interacts with RAD53. Hyperphosphorylated in response to DNA damage by MEC1.

It localises to the cytoplasm. Involved in normal G2/M phase transition of the mitotic cell cycle. In association with RAD53, also involved in checkpoint control in response to DNA damage. The chain is RNA-binding protein PIN4 (PIN4) from Saccharomyces cerevisiae (strain ATCC 204508 / S288c) (Baker's yeast).